We begin with the raw amino-acid sequence, 217 residues long: MLAILDYKAGNQTSVRRALEHLGVPCAITADPAMLESAAGVIFPGVGAAGQAMSALAEAGLDKALHHVARRGQPLLGICLGCQILLESSEENAAKTLGIVPGVCRRFEDHMRQEDGSAAPVPHMGWNSLEAVAPCVLLDGIDPASEYYFVHSYYVEPDPSLVLATTTYGRTFCSLYGRDGLWAAQFHPEKSGRPGLRLLGNFYEYCRQSRQEARHAQ.

Residues 1 to 212 (MLAILDYKAG…YEYCRQSRQE (212 aa)) enclose the Glutamine amidotransferase type-1 domain. The Nucleophile role is filled by C79. Residues H187 and E189 contribute to the active site.

Heterodimer of HisH and HisF.

It is found in the cytoplasm. It carries out the reaction 5-[(5-phospho-1-deoxy-D-ribulos-1-ylimino)methylamino]-1-(5-phospho-beta-D-ribosyl)imidazole-4-carboxamide + L-glutamine = D-erythro-1-(imidazol-4-yl)glycerol 3-phosphate + 5-amino-1-(5-phospho-beta-D-ribosyl)imidazole-4-carboxamide + L-glutamate + H(+). It catalyses the reaction L-glutamine + H2O = L-glutamate + NH4(+). Its pathway is amino-acid biosynthesis; L-histidine biosynthesis; L-histidine from 5-phospho-alpha-D-ribose 1-diphosphate: step 5/9. Functionally, IGPS catalyzes the conversion of PRFAR and glutamine to IGP, AICAR and glutamate. The HisH subunit catalyzes the hydrolysis of glutamine to glutamate and ammonia as part of the synthesis of IGP and AICAR. The resulting ammonia molecule is channeled to the active site of HisF. The sequence is that of Imidazole glycerol phosphate synthase subunit HisH from Desulfovibrio desulfuricans (strain ATCC 27774 / DSM 6949 / MB).